The sequence spans 105 residues: Ferredoxin--nitrite reductase, chloroplastic (105 aa).

Positions 28 and 32 each coordinate [4Fe-4S] cluster. Siroheme is bound at residue C32.

It belongs to the nitrite and sulfite reductase 4Fe-4S domain family. Monomer. The cofactor is siroheme. [4Fe-4S] cluster serves as cofactor. In terms of tissue distribution, highest expression in roots and hypocotyls. Some expression in cotyledonary whorls.

Its subcellular location is the plastid. The protein resides in the chloroplast. The catalysed reaction is 6 oxidized [2Fe-2S]-[ferredoxin] + NH4(+) + 2 H2O = nitrite + 6 reduced [2Fe-2S]-[ferredoxin] + 8 H(+). Its pathway is nitrogen metabolism; nitrate reduction (assimilation). In Pinus sylvestris (Scotch pine), this protein is Ferredoxin--nitrite reductase, chloroplastic (NIR).